We begin with the raw amino-acid sequence, 428 residues long: Protein Wnt-8b (428 aa).

Positions 1–22 (MFYTGSFWFIFFILPAIPFCHS) are cleaved as a signal peptide. Residues C54 and C65 are joined by a disulfide bond. N-linked (GlcNAc...) asparagine glycosylation is found at N123 and N176. 10 disulfides stabilise this stretch: C177–C185, C187–C205, C253–C267, C255–C262, C329–C367, C345–C360, C364–C406, C382–C397, C384–C394, and C389–C390. Residue S259 is the site of O-palmitoleoyl serine attachment. An N-linked (GlcNAc...) asparagine glycan is attached at N332.

This sequence belongs to the Wnt family. Palmitoleoylation is required for efficient binding to frizzled receptors. Depalmitoleoylation leads to Wnt signaling pathway inhibition. Post-translationally, proteolytic processing by tiki1 and tiki2 promotes oxidation and formation of large disulfide-bond oligomers, leading to inactivation of wnt8b. As to expression, in adults, in brain.

The protein resides in the secreted. It localises to the extracellular space. It is found in the extracellular matrix. In terms of biological role, ligand for members of the frizzled family of seven transmembrane receptors. Plays a role in the initiation of dorsal axis development. May activate a Nieuwkoop center-like signaling pathway. The protein is Protein Wnt-8b (wnt8b) of Xenopus laevis (African clawed frog).